Reading from the N-terminus, the 1100-residue chain is Conjugal transfer protein TraA (1100 aa).

An ATP-binding site is contributed by 404–411 (GRAGAGKT).

The protein belongs to the MobA/MobL family.

The sequence is that of Conjugal transfer protein TraA (traA) from Agrobacterium fabrum (strain C58 / ATCC 33970) (Agrobacterium tumefaciens (strain C58)).